Here is a 576-residue protein sequence, read N- to C-terminus: Arginine--tRNA ligase (576 aa).

Residues 122–132 (PNVAKQMHVGH) carry the 'HIGH' region motif.

Belongs to the class-I aminoacyl-tRNA synthetase family. As to quaternary structure, monomer.

The protein resides in the cytoplasm. It carries out the reaction tRNA(Arg) + L-arginine + ATP = L-arginyl-tRNA(Arg) + AMP + diphosphate. The protein is Arginine--tRNA ligase of Yersinia pestis bv. Antiqua (strain Antiqua).